The sequence spans 171 residues: Large ribosomal subunit protein bL17 (171 aa).

The disordered stretch occupies residues 130–171 (PGYKKSKGKKATKAKGKKAKATPAAEAAAAATTEAAPAEEKK). Over residues 133–149 (KKSKGKKATKAKGKKAK) the composition is skewed to basic residues. Low complexity predominate over residues 150 to 165 (ATPAAEAAAAATTEAA).

Belongs to the bacterial ribosomal protein bL17 family. In terms of assembly, part of the 50S ribosomal subunit. Contacts protein L32.

This chain is Large ribosomal subunit protein bL17, found in Opitutus terrae (strain DSM 11246 / JCM 15787 / PB90-1).